Here is a 95-residue protein sequence, read N- to C-terminus: Aspartyl/glutamyl-tRNA(Asn/Gln) amidotransferase subunit C (95 aa).

This sequence belongs to the GatC family. As to quaternary structure, heterotrimer of A, B and C subunits.

The catalysed reaction is L-glutamyl-tRNA(Gln) + L-glutamine + ATP + H2O = L-glutaminyl-tRNA(Gln) + L-glutamate + ADP + phosphate + H(+). The enzyme catalyses L-aspartyl-tRNA(Asn) + L-glutamine + ATP + H2O = L-asparaginyl-tRNA(Asn) + L-glutamate + ADP + phosphate + 2 H(+). Its function is as follows. Allows the formation of correctly charged Asn-tRNA(Asn) or Gln-tRNA(Gln) through the transamidation of misacylated Asp-tRNA(Asn) or Glu-tRNA(Gln) in organisms which lack either or both of asparaginyl-tRNA or glutaminyl-tRNA synthetases. The reaction takes place in the presence of glutamine and ATP through an activated phospho-Asp-tRNA(Asn) or phospho-Glu-tRNA(Gln). The sequence is that of Aspartyl/glutamyl-tRNA(Asn/Gln) amidotransferase subunit C from Campylobacter lari (strain RM2100 / D67 / ATCC BAA-1060).